The chain runs to 159 residues: Ribonuclease H (159 aa).

The RNase H type-1 domain maps to 10–153 (TQTQVVIYTD…ADALANQGVE (144 aa)). Residues aspartate 19, glutamate 57, aspartate 79, and aspartate 145 each coordinate Mg(2+).

The protein belongs to the RNase H family. In terms of assembly, monomer. Mg(2+) serves as cofactor.

The protein localises to the cytoplasm. It carries out the reaction Endonucleolytic cleavage to 5'-phosphomonoester.. In terms of biological role, endonuclease that specifically degrades the RNA of RNA-DNA hybrids. The sequence is that of Ribonuclease H from Polaromonas sp. (strain JS666 / ATCC BAA-500).